The following is a 190-amino-acid chain: Protein LIGHT-DEPENDENT SHORT HYPOCOTYLS 1 (190 aa).

A compositionally biased stretch (polar residues) spans 1–26; the sequence is MDLISHQPNKNPNSSTQLTPPSSSRY. Disordered regions lie at residues 1–28 and 145–190; these read MDLI…RYEN and GVSY…GATV. The 128-residue stretch at 25–152 folds into the ALOG domain; the sequence is RYENQKRRDW…ARGVSYEKKR (128 aa). Residues 150 to 154 carry the Nuclear localization signal motif; it reads KKRKR. Residues 158–179 show a composition bias toward low complexity; it reads QKPQTQPPLQLQQQQQQPQQGQ. Residues 180-190 are compositionally biased toward polar residues; sequence SMMANYSGATV.

The protein belongs to the plant homeotic and developmental regulators ALOG protein family. Expressed in hypocotyls, shoot apices and lateral root primordia and, weakly, in vascular tissues.

It localises to the nucleus. Probable transcription regulator that acts as a developmental regulator by promoting cell growth in response to continuous red (cR), far-red (cFR) and blue (cB) light in a phytochrome-dependent manner, at least during seedling development. In Arabidopsis thaliana (Mouse-ear cress), this protein is Protein LIGHT-DEPENDENT SHORT HYPOCOTYLS 1 (LSH1).